The sequence spans 708 residues: Leucine-rich repeat neuronal protein 3 (708 aa).

The signal sequence occupies residues 1–22 (MKDMPLRIHVLLGLAITTLVQA). The 47-residue stretch at 23–69 (VDKKVDCPRLCTCEIRPWFTPRSIYMEASTVDCNDLGLLTFPARLPA) folds into the LRRNT domain. Residues 23–628 (VDKKVDCPRL…KEYEKNNTTT (606 aa)) are Extracellular-facing. LRR repeat units lie at residues 70 to 91 (NTQILLLQTNNIAKIEYSTDFP), 93 to 114 (NLTGLDLSQNNLSSVTNINVKK), 117 to 138 (QLLSVYLEENKLTELPEKCLSE), 141 to 162 (NLQELYINHNLLSTISPGAFIG), 165 to 186 (NLLRLHLNSNRLQMINSKWFDA), 189 to 210 (NLEILMIGENPIIRIKDMNFKP), 213 to 234 (NLRSLVIAGINLTEIPDNALVG), 237 to 258 (NLESISFYDNRLIKVPHVALQK), 261 to 282 (NLKFLDLNKNPINRIRRGDFSN), 285 to 304 (HLKELGINNMPELISIDSLA), 310 to 332 (DLRKIEATNNPRLSYIHPNAFFR), and 335 to 358 (KLESLMLNSNALSALYHGTIESLP). N-linked (GlcNAc...) asparagine glycosylation is found at Asn-93 and Asn-103. N-linked (GlcNAc...) asparagine glycosylation occurs at Asn-223. Residues 368-421 (NPIRCDCVIRWMNMNKTNIRFMEPDSLFCVDPPEFQGQNVRQVHFRDMMEICLP) enclose the LRRCT domain. An N-linked (GlcNAc...) asparagine glycan is attached at Asn-382. An Ig-like C2-type domain is found at 421 to 514 (PLIAPESFPS…DLKSVMIKVD (94 aa)). A disulfide bridge links Cys-444 with Cys-496. Residues Asn-522, Asn-579, Asn-608, Asn-624, and Asn-625 are each glycosylated (N-linked (GlcNAc...) asparagine). Positions 523 to 617 (GSLNIKIRDI…NVTTKGLHPD (95 aa)) constitute a Fibronectin type-III domain. Residues 629–649 (LMACLGGLLGIIGVICLISCL) traverse the membrane as a helical segment. The Cytoplasmic segment spans residues 650–708 (SPEMNCDGGHSYVRNYLQKPTFALGELYPPLINLWEAGKEKSTSLKVKATVIGLPTNMS).

The protein resides in the membrane. This is Leucine-rich repeat neuronal protein 3 (LRRN3) from Homo sapiens (Human).